We begin with the raw amino-acid sequence, 449 residues long: UDP-N-acetylglucosamine 1-carboxyvinyltransferase (449 aa).

Positions 1 to 12 (MQVTVNEHDAVE) are enriched in basic and acidic residues. Residues 1-30 (MQVTVNEHDAVERVATATPAGNREAHAHGT) are disordered. 51–52 (KN) is a binding site for phosphoenolpyruvate. Residue R121 participates in UDP-N-acetyl-alpha-D-glucosamine binding. C145 acts as the Proton donor in catalysis. Position 145 is a 2-(S-cysteinyl)pyruvic acid O-phosphothioketal (C145). UDP-N-acetyl-alpha-D-glucosamine-binding positions include 150–154 (RPVDQ), D333, and I355.

It belongs to the EPSP synthase family. MurA subfamily.

The protein resides in the cytoplasm. The enzyme catalyses phosphoenolpyruvate + UDP-N-acetyl-alpha-D-glucosamine = UDP-N-acetyl-3-O-(1-carboxyvinyl)-alpha-D-glucosamine + phosphate. It functions in the pathway cell wall biogenesis; peptidoglycan biosynthesis. Its function is as follows. Cell wall formation. Adds enolpyruvyl to UDP-N-acetylglucosamine. The polypeptide is UDP-N-acetylglucosamine 1-carboxyvinyltransferase (Burkholderia pseudomallei (strain 1710b)).